We begin with the raw amino-acid sequence, 513 residues long: NAD(P)H-quinone oxidoreductase subunit 2 (513 aa).

Helical transmembrane passes span 15-35, 43-63, 80-100, 110-130, 133-153, 168-188, 211-231, 245-265, 281-301, 307-327, 335-355, 379-399, 401-421, and 467-487; these read VIWPEGILIITLMVILIGDLI, WLPYVAIAGLLAAVVALYFTW, LSIVFRAIIALSTASTVLMSI, LAEFLAIMLTATLGGMFLSGA, LVMIFISLEMLSISSYLMTGY, LLIGASSSAIFLYGVSLLYGL, LALAIALVFVIAGIAFKISAV, PTPVVAFLSVGSKAAGFALAI, FIFIALAILSMILGNVVALAQ, MLAYSSIGQAGFVMIGLTAGT, IFYLLIYLFMNLGAFACVILF, LCLSICLLSLGGIPPLAGFFG, IYLFWAGWQAGLYALVLVGLV, and VGIVLSLVATSLAGILSNPLF.

This sequence belongs to the complex I subunit 2 family. As to quaternary structure, NDH-1 can be composed of about 15 different subunits; different subcomplexes with different compositions have been identified which probably have different functions.

It is found in the cellular thylakoid membrane. The enzyme catalyses a plastoquinone + NADH + (n+1) H(+)(in) = a plastoquinol + NAD(+) + n H(+)(out). It carries out the reaction a plastoquinone + NADPH + (n+1) H(+)(in) = a plastoquinol + NADP(+) + n H(+)(out). In terms of biological role, NDH-1 shuttles electrons from an unknown electron donor, via FMN and iron-sulfur (Fe-S) centers, to quinones in the respiratory and/or the photosynthetic chain. The immediate electron acceptor for the enzyme in this species is believed to be plastoquinone. Couples the redox reaction to proton translocation, and thus conserves the redox energy in a proton gradient. Cyanobacterial NDH-1 also plays a role in inorganic carbon-concentration. This Microcystis aeruginosa (strain NIES-843 / IAM M-2473) protein is NAD(P)H-quinone oxidoreductase subunit 2.